The following is a 621-amino-acid chain: Kininogen-1 (621 aa).

The first 18 residues, 1 to 18 (MKLITILFLCSRLLPSLT), serve as a signal peptide directing secretion. One can recognise a Cystatin kininogen-type 1 domain in the interval 27-131 (CNDQDVFKAV…IQTCLITPAE (105 aa)). 9 disulfide bridges follow: Cys27/Cys591, Cys82/Cys93, Cys106/Cys125, Cys141/Cys144, Cys205/Cys217, Cys228/Cys247, Cys263/Cys266, Cys327/Cys339, and Cys350/Cys369. Asn47 and Asn87 each carry an N-linked (GlcNAc...) asparagine glycan. Thr136 carries O-linked (GalNAc...) threonine; partial glycosylation. Residues 150–253 (TKSPDLEPVL…SQKCDLYPVK (104 aa)) form the Cystatin kininogen-type 2 domain. N-linked (GlcNAc...) asparagine glycosylation is found at Asn168 and Asn169. A glycan (N-linked (GlcNAc...) asparagine; partial) is linked at Asn197. The N-linked (GlcNAc...) asparagine glycan is linked to Asn204. One can recognise a Cystatin kininogen-type 3 domain in the interval 272–375 (VDSPDLEEPL…TVNCQPLGQT (104 aa)). A Phosphoserine modification is found at Ser331. Positions 396–497 (EGSTTVSLPH…GKNNGKHYDW (102 aa)) are disordered. A glycan (O-linked (GalNAc...) serine) is linked at Ser398. O-linked (GalNAc...) threonine glycans are attached at residues Thr399 and Thr400. Ser406 carries an O-linked (GalNAc...) serine glycan. Residues 444-492 (GHKHKHDQGHGHHGSHGLGHGHQKQHGLGHGHKHGHGHGKHKNKGKNNG) show a composition bias toward basic residues. O-linked (GalNAc...) serine glycosylation is present at Ser512. Thr520, Thr524, Thr536, Thr548, Thr553, and Thr570 each carry an O-linked (GalNAc...) threonine glycan. An O-linked (GalNAc...) serine glycan is attached at Ser581.

In terms of processing, bradykinin is released from kininogen by plasma kallikrein. Post-translationally, phosphorylated by FAM20C in the extracellular medium. Bradykinin is inactivated by ACE, which removes the dipeptide Arg-Phe from its C-terminus. As to expression, plasma.

The protein localises to the secreted. Its subcellular location is the extracellular space. Its function is as follows. Kininogens are inhibitors of thiol proteases. HMW-kininogen plays an important role in blood coagulation by helping to position optimally prekallikrein and factor XI next to factor XII; HMW-kininogen inhibits the thrombin- and plasmin-induced aggregation of thrombocytes. LMW-kininogen inhibits the aggregation of thrombocytes. LMW-kininogen is in contrast to HMW-kininogen not involved in blood clotting. Functionally, the active peptide bradykinin is a potent vasodilatator that is released from HMW-kininogen shows a variety of physiological effects: (A) influence in smooth muscle contraction, (B) induction of hypotension, (C) natriuresis and diuresis, (D) decrease in blood glucose level, (E) it is a mediator of inflammation and causes (E1) increase in vascular permeability, (E2) stimulation of nociceptors (4E3) release of other mediators of inflammation (e.g. prostaglandins), (F) it has a cardioprotective effect (directly via bradykinin action, indirectly via endothelium-derived relaxing factor action). This is Kininogen-1 (KNG1) from Bos taurus (Bovine).